The sequence spans 381 residues: NF-kappa-B inhibitor-like protein 1 (381 aa).

A disordered region spans residues 1–32 (MSNPSPQAPEEEASTSVCRPQSSMASVSRRHR). The segment covering 14–26 (STSVCRPQSSMAS) has biased composition (polar residues). ANK repeat units follow at residues 64–93 (GQPP…DPAH) and 97–133 (HGDT…IKNK). 3 disordered regions span residues 129–166 (GIKN…REWR), 186–242 (DDAS…QEEE), and 257–294 (LCES…RGSL). At S150 the chain carries Phosphoserine. The span at 150-159 (SAEEEEDEEV) shows a compositional bias: acidic residues. Composition is skewed to basic and acidic residues over residues 204–228 (RLAR…RPPR) and 257–270 (LCES…EAQG).

In terms of assembly, interacts with CACTIN (via N-terminal domain); the interaction occurs in a pro-inflammatory-independent manner.

It is found in the nucleus. Its function is as follows. Involved in the regulation of innate immune response. Acts as negative regulator of Toll-like receptor and interferon-regulatory factor (IRF) signaling pathways. Contributes to the negative regulation of transcriptional activation of NF-kappa-B target genes in response to endogenous pro-inflammatory stimuli. The polypeptide is NF-kappa-B inhibitor-like protein 1 (Nfkbil1) (Rattus norvegicus (Rat)).